A 112-amino-acid chain; its full sequence is cAMP-regulated phosphoprotein 19 (112 aa).

An N-acetylmethionine modification is found at M1. Over residues 1 to 11 the composition is skewed to low complexity; the sequence is MSAEVPEAASA. A disordered region spans residues 1-49; it reads MSAEVPEAASAEEQKEMEDKVTSPEKAEEAKLKARYPHLGQKPGGSDFL. S2 carries the N-acetylserine modification. 2 positions are modified to phosphoserine: S2 and S23. A compositionally biased stretch (basic and acidic residues) spans 12–32; the sequence is EEQKEMEDKVTSPEKAEEAKL. Phosphoserine; by GWL is present on residues S62 and S104. Positions 74-112 are disordered; that stretch reads NKQLPAAAPDKTEVTGDHIPTPQDLPQRKPSLVASKLAG. At S104 the chain carries Phosphoserine; by PKA. K109 bears the N6-acetyllysine mark.

It belongs to the endosulfine family. Interacts (when phosphorylated at Ser-62) with PPP2R2D. Interacts with SNCA. Interacts with PPP2R2A; the interaction is direct and this interaction inhibits PP2A activity. Phosphorylation at Ser-62 by MASTL/GWL during mitosis is essential for interaction with PPP2R2D (PR55-delta) and subsequent inactivation of PP2A. Phosphorylated by PKA.

It localises to the cytoplasm. Its function is as follows. Protein phosphatase inhibitor that specifically inhibits protein phosphatase 2A (PP2A) during mitosis. Inhibition of PP2A is enhanced when ARPP19 is phosphorylated. When phosphorylated at Ser-62 during mitosis, specifically interacts with PPP2R2D (PR55-delta) and inhibits its activity, leading to inactivation of PP2A, an essential condition to keep cyclin-B1-CDK1 activity high during M phase. May indirectly enhance GAP-43 expression by binding to the NGF-regulatory region of its mRNA. This Mus musculus (Mouse) protein is cAMP-regulated phosphoprotein 19 (Arpp19).